Consider the following 284-residue polypeptide: Tropomyosin Tod p 1.0102 (284 aa).

The stretch at 15–273 (KEVATDKAEQ…KERYKSISDE (259 aa)) forms a coiled coil. The disordered stretch occupies residues 103 to 136 (EERLTSAQSKLEDASKAADESERGRKVLENRSQG).

Belongs to the tropomyosin family. As to quaternary structure, homodimer. In terms of processing, the N-terminus is blocked. As to expression, expressed in mantle muscle (at protein level).

Functionally, tropomyosin, in association with the troponin complex, plays a central role in the calcium dependent regulation of muscle contraction. The protein is Tropomyosin Tod p 1.0102 of Todarodes pacificus (Japanese flying squid).